Here is a 188-residue protein sequence, read N- to C-terminus: Elongation factor P (188 aa).

Lysine 34 is modified (N6-(3,6-diaminohexanoyl)-5-hydroxylysine).

This sequence belongs to the elongation factor P family. Post-translationally, may be beta-lysylated on the epsilon-amino group of Lys-34 by the combined action of EpmA and EpmB, and then hydroxylated on the C5 position of the same residue by EpmC (if this protein is present). Lysylation is critical for the stimulatory effect of EF-P on peptide-bond formation. The lysylation moiety may extend toward the peptidyltransferase center and stabilize the terminal 3-CCA end of the tRNA. Hydroxylation of the C5 position on Lys-34 may allow additional potential stabilizing hydrogen-bond interactions with the P-tRNA.

It is found in the cytoplasm. It functions in the pathway protein biosynthesis; polypeptide chain elongation. Involved in peptide bond synthesis. Alleviates ribosome stalling that occurs when 3 or more consecutive Pro residues or the sequence PPG is present in a protein, possibly by augmenting the peptidyl transferase activity of the ribosome. Modification of Lys-34 is required for alleviation. This is Elongation factor P from Glaesserella parasuis serovar 5 (strain SH0165) (Haemophilus parasuis).